The sequence spans 710 residues: NAD(P)H-quinone oxidoreductase subunit 5, chloroplastic (710 aa).

The next 17 helical transmembrane spans lie at 9–29 (WIIPFVPLLVPMLIGAGLLIF), 40–60 (WSFQSVLLLSIVMAFSIYLSI), 89–109 (IDPLTSIMSILVTTVGILVLI), 125–145 (FTYMSFFCAAMLGLVTSSNFI), 147–167 (IYIFWELVGLCSYLLIGFWFT), 185–205 (GDFGLLLGILGFYWITGSFEF), 221–241 (VNLLFVTLCAALLFVGAIAKS), 258–278 (TPISALIHAATLVAAGIFLVA), 280–300 (LLPLFLVIPYIMYFISLIGII), 327–347 (LGYMMVALGMGSYRSALFHLI), 354–374 (ALLFLAAGSVIHSMETIIGYS), 396–416 (GAFLLGTLSLCGIPPLACFWS), 425–445 (WLYSPIFALIAWGTVGLTAFY), 519–539 (MLFPQILLCFVTFVIGFLGIP), 571–591 (FLKHTVISGGIAYCGIFIAFL), 657–676 (SFDLRIIDQIFNCFAFLSFI), and 689–709 (IPFYLFFYFFFVSIFIFLFYK).

Belongs to the complex I subunit 5 family. NDH is composed of at least 16 different subunits, 5 of which are encoded in the nucleus.

The protein resides in the plastid. It is found in the chloroplast thylakoid membrane. The catalysed reaction is a plastoquinone + NADH + (n+1) H(+)(in) = a plastoquinol + NAD(+) + n H(+)(out). It carries out the reaction a plastoquinone + NADPH + (n+1) H(+)(in) = a plastoquinol + NADP(+) + n H(+)(out). Its function is as follows. NDH shuttles electrons from NAD(P)H:plastoquinone, via FMN and iron-sulfur (Fe-S) centers, to quinones in the photosynthetic chain and possibly in a chloroplast respiratory chain. The immediate electron acceptor for the enzyme in this species is believed to be plastoquinone. Couples the redox reaction to proton translocation, and thus conserves the redox energy in a proton gradient. The chain is NAD(P)H-quinone oxidoreductase subunit 5, chloroplastic (ndhF) from Ipomoea purpurea (Common morning glory).